Here is a 771-residue protein sequence, read N- to C-terminus: DNA polymerase 1 (771 aa).

The protein belongs to the DNA polymerase type-B family.

It catalyses the reaction DNA(n) + a 2'-deoxyribonucleoside 5'-triphosphate = DNA(n+1) + diphosphate. The chain is DNA polymerase 1 (polI) from Pyrococcus abyssi (strain GE5 / Orsay).